The primary structure comprises 1091 residues: ATP-dependent helicase/deoxyribonuclease subunit B (1091 aa).

The protein belongs to the helicase family. AddB/RexB type 2 subfamily. Heterodimer of AddA and RexB. Requires Mg(2+) as cofactor.

Functionally, the heterodimer acts as both an ATP-dependent DNA helicase and an ATP-dependent, dual-direction single-stranded exonuclease. Recognizes the chi site generating a DNA molecule suitable for the initiation of homologous recombination. This subunit has 5' -&gt; 3' nuclease activity but not helicase activity. This is ATP-dependent helicase/deoxyribonuclease subunit B from Streptococcus pneumoniae (strain ATCC 700669 / Spain 23F-1).